Here is a 260-residue protein sequence, read N- to C-terminus: Putative hydro-lyase Dshi_0610 (260 aa).

The protein belongs to the D-glutamate cyclase family.

The chain is Putative hydro-lyase Dshi_0610 from Dinoroseobacter shibae (strain DSM 16493 / NCIMB 14021 / DFL 12).